The sequence spans 545 residues: T-complex protein 1 subunit gamma (545 aa).

An N-acetylmethionine modification is found at Met1. Positions 1-24 are disordered; sequence MMGHRPVLVLSQNTKRESGRKVQS. A Phosphoserine modification is found at Ser11. Lys15 is covalently cross-linked (Glycyl lysine isopeptide (Lys-Gly) (interchain with G-Cter in SUMO2)). Position 42 (Gly42) interacts with ADP. An ATP-binding site is contributed by Gly42. Residue Asp93 participates in Mg(2+) binding. ADP-binding residues include Gly94, Thr95, Thr96, Ser97, Thr162, and Lys163. Residues Gly94, Thr95, and Thr96 each coordinate ATP. At Ser170 the chain carries Phosphoserine. An N6-acetyllysine modification is found at Lys222. Phosphoserine is present on residues Ser243 and Ser244. A Phosphotyrosine modification is found at Tyr247. Glycyl lysine isopeptide (Lys-Gly) (interchain with G-Cter in SUMO2) cross-links involve residues Lys248 and Lys249. Position 252 is a phosphoserine (Ser252). A disulfide bridge links Cys366 with Cys372. Residue Lys381 forms a Glycyl lysine isopeptide (Lys-Gly) (interchain with G-Cter in SUMO2) linkage. Gly411 serves as a coordination point for ADP. Residue Gly411 participates in ATP binding. Phosphothreonine occurs at positions 430 and 459. ADP contacts are provided by Gly482, Glu483, Glu497, and Lys502. ATP is bound at residue Gly482. Glu497 serves as a coordination point for ATP. The tract at residues 526-545 is disordered; the sequence is HKKKGDDQSRQGGAPDAGQE.

It belongs to the TCP-1 chaperonin family. Component of the chaperonin-containing T-complex (TRiC), a hexadecamer composed of two identical back-to-back stacked rings enclosing a protein folding chamber. Each ring is made up of eight different subunits: TCP1/CCT1, CCT2, CCT3, CCT4, CCT5, CCT6A/CCT6, CCT7, CCT8. Interacts with PACRG. Interacts with DNAAF4. Interacts with DLEC1.

Its subcellular location is the cytoplasm. It catalyses the reaction ATP + H2O = ADP + phosphate + H(+). Functionally, component of the chaperonin-containing T-complex (TRiC), a molecular chaperone complex that assists the folding of actin, tubulin and other proteins upon ATP hydrolysis. The TRiC complex mediates the folding of WRAP53/TCAB1, thereby regulating telomere maintenance. As part of the TRiC complex may play a role in the assembly of BBSome, a complex involved in ciliogenesis regulating transports vesicles to the cilia. In Pongo abelii (Sumatran orangutan), this protein is T-complex protein 1 subunit gamma (CCT3).